Consider the following 570-residue polypeptide: Endo-1,4-beta-xylanase 4 (570 aa).

The signal sequence occupies residues 1–24 (MKRFNYGFFHLVLFLISLLLLGSG). 3 N-linked (GlcNAc...) asparagine glycosylation sites follow: N92, N190, and N300. Positions 195–494 (EGSVISIEQI…TQAGDLIDKL (300 aa)) constitute a GH10 domain. E325 serves as the catalytic Proton donor. N339 is a glycosylation site (N-linked (GlcNAc...) asparagine). E432 acts as the Nucleophile in catalysis. An N-linked (GlcNAc...) asparagine glycan is attached at N545.

It belongs to the glycosyl hydrolase 10 (cellulase F) family.

The enzyme catalyses Endohydrolysis of (1-&gt;4)-beta-D-xylosidic linkages in xylans.. The protein operates within glycan degradation; xylan degradation. Binds to and hydrolyzes insoluble and soluble xylan substrates. This Arabidopsis thaliana (Mouse-ear cress) protein is Endo-1,4-beta-xylanase 4.